Here is a 389-residue protein sequence, read N- to C-terminus: MVAEAEVMHQPVPVLEVPYHRCVAKGVEEVAAAAAVAPPPVVEVEVAVQVPHMGLESAAGAPSISVDALQFVPSIRSGSFADIGPRRYMEDEHIRIDDLSAHLGSLLVCPLPSAFYGVFDGHGGLDAAAYMKRHAMRFLFEDSEFPQASQVDETYVQSVENSVRRAFLQADLALADDLDISRSSGTTALTALVFGRQLLVANAGDCRAVLCRRGVAMEMSRDHRANYAEECERVAASGGYIEDGYLNGVLSVTRALGDWDMKMPDGSISPLIAEPEFRQTMLTEDDEFLIMGCDGIWDVMTSQHAVSIVRRGLRQHDDPERCARELVMEAKRLETADNLTVIVVCFVSELGSPRQEQVGGQAGVARPRSCKSLSAEALCNLRSWLETDR.

One can recognise a PPM-type phosphatase domain in the interval 76 to 346; sequence RSGSFADIGP…DNLTVIVVCF (271 aa). Mn(2+)-binding residues include Asp120, Gly121, Asp294, and Asp337.

It belongs to the PP2C family. Mg(2+) serves as cofactor. It depends on Mn(2+) as a cofactor.

It carries out the reaction O-phospho-L-seryl-[protein] + H2O = L-seryl-[protein] + phosphate. It catalyses the reaction O-phospho-L-threonyl-[protein] + H2O = L-threonyl-[protein] + phosphate. The chain is Probable protein phosphatase 2C 47 from Oryza sativa subsp. japonica (Rice).